Here is a 134-residue protein sequence, read N- to C-terminus: Small ribosomal subunit protein bS16 (134 aa).

The segment at 79 to 134 (AGIAKRPSRNNPTKGEPGKKAQERLALAKQAEEEAAAKAAEAAAAAAAPAEEAASE) is disordered. Residues 115–134 (AKAAEAAAAAAAPAEEAASE) show a composition bias toward low complexity.

This sequence belongs to the bacterial ribosomal protein bS16 family.

This chain is Small ribosomal subunit protein bS16, found in Brucella suis (strain ATCC 23445 / NCTC 10510).